Reading from the N-terminus, the 269-residue chain is 4-hydroxy-tetrahydrodipicolinate reductase (269 aa).

Residues 8-13 (GAAGRM) and E34 contribute to the NAD(+) site. Residue R35 participates in NADP(+) binding. Residues 98–100 (GTT) and 122–125 (APNY) each bind NAD(+). The active-site Proton donor/acceptor is H155. H156 is a (S)-2,3,4,5-tetrahydrodipicolinate binding site. K159 functions as the Proton donor in the catalytic mechanism. 165–166 (GT) is a (S)-2,3,4,5-tetrahydrodipicolinate binding site.

The protein belongs to the DapB family.

It localises to the cytoplasm. It catalyses the reaction (S)-2,3,4,5-tetrahydrodipicolinate + NAD(+) + H2O = (2S,4S)-4-hydroxy-2,3,4,5-tetrahydrodipicolinate + NADH + H(+). The catalysed reaction is (S)-2,3,4,5-tetrahydrodipicolinate + NADP(+) + H2O = (2S,4S)-4-hydroxy-2,3,4,5-tetrahydrodipicolinate + NADPH + H(+). It functions in the pathway amino-acid biosynthesis; L-lysine biosynthesis via DAP pathway; (S)-tetrahydrodipicolinate from L-aspartate: step 4/4. Catalyzes the conversion of 4-hydroxy-tetrahydrodipicolinate (HTPA) to tetrahydrodipicolinate. This chain is 4-hydroxy-tetrahydrodipicolinate reductase, found in Vibrio atlanticus (strain LGP32) (Vibrio splendidus (strain Mel32)).